Here is a 267-residue protein sequence, read N- to C-terminus: MPQVTMRQMLEAGVHFGHQTRYWNPKMAPYIFGARGKIHIINLEKTVPLFNDAMNFISSVAQKRGTVLFLGTKRSARETIKEEAERCGMPFMNQRWLGGTLTNFRTVKQSVARLKELEAGETDGTFEKLVKHEVLGLRRERDKLEASLGGIKDMNRLPDAIFVIDIGHEDIAIKEAKKLGIPVIAVVDTNYNPELVDYAIPGNDDAIRAVQLYSRAAADAVLEGKAAAPHAATVREEEFADAPAEDAKPARRAPAKKAAADKGEAQA.

Residues 232–267 (ATVREEEFADAPAEDAKPARRAPAKKAAADKGEAQA) form a disordered region. Residues 258–267 (AAADKGEAQA) show a composition bias toward basic and acidic residues.

Belongs to the universal ribosomal protein uS2 family.

This Stenotrophomonas maltophilia (strain R551-3) protein is Small ribosomal subunit protein uS2.